A 247-amino-acid chain; its full sequence is Neurotrophic factor BDNF precursor form (247 aa).

The first 18 residues, 1–18, serve as a signal peptide directing secretion; the sequence is MTILFLTMVISYFGCMKA. A propeptide spanning residues 19–128 is cleaved from the precursor; sequence APMKEASVRG…AANMSMRVRR (110 aa). Asn-121 is a glycosylation site (N-linked (GlcNAc...) asparagine). Cystine bridges form between Cys-141-Cys-208, Cys-186-Cys-237, and Cys-196-Cys-239.

Belongs to the NGF-beta family. As to quaternary structure, monomers and homodimers. Binds to NTRK2/TRKB. Can form heterodimers with other neurotrophin family members, such as NTF3 and NTF4 (in vitro), but the physiological relevance of this is not clear. BDNF precursor form: interacts with the heterodimer formed by NGFR and SORCS2. Mature BDNF has much lower affinity for the heterodimer formed by NGFR and SORCS2. In terms of processing, N-glycosylated and glycosulfated, contrary to mature BDNF. Post-translationally, mature BDNF is produced by proteolytic removal of the propeptide, catalyzed by a FURIN family member. In addition, the precursor form is proteolytically cleaved within the propeptide, but this is not an obligatory intermediate for the production of mature BDNF. Can be converted into mature BDNF by plasmin (PLG).

Its subcellular location is the secreted. Functionally, important signaling molecule that activates signaling cascades downstream of NTRK2. During development, promotes the survival and differentiation of selected neuronal populations of the peripheral and central nervous systems. Participates in axonal growth, pathfinding and in the modulation of dendritic growth and morphology. Major regulator of synaptic transmission and plasticity at adult synapses in many regions of the CNS. The versatility of BDNF is emphasized by its contribution to a range of adaptive neuronal responses including long-term potentiation (LTP), long-term depression (LTD), certain forms of short-term synaptic plasticity, as well as homeostatic regulation of intrinsic neuronal excitability. This chain is Neurotrophic factor BDNF precursor form (BDNF), found in Canis lupus familiaris (Dog).